Here is a 425-residue protein sequence, read N- to C-terminus: Synaptotagmin-4 (425 aa).

The Vesicular segment spans residues 1–16 (MAPITTSRVEFDEIPT). The chain crosses the membrane as a helical span at residues 17–37 (VVGIFSAFGLVFTVSLFAWIC). Over 38–425 (CQRRSAKSNK…IAKWHMLCDG (388 aa)) the chain is Cytoplasmic. The interval 127 to 147 (TETEKEANSPESLKSSTSLTS) is disordered. Ser135 carries the post-translational modification Phosphoserine; by MAPK8. Low complexity predominate over residues 137-146 (ESLKSSTSLT). 2 C2 domains span residues 153 to 274 (KLGT…MLMT) and 287 to 420 (GRGE…AKWH). 3 residues coordinate Ca(2+): Asp246, Ser249, and Asp252.

The protein belongs to the synaptotagmin family. As to quaternary structure, interacts with KIF1A; the interaction increases in presence of calcium and decreases when SYT4 is phosphorylated at Ser-135. Ca(2+) serves as cofactor. Post-translationally, phosphorylation at Ser-135 by MAPK8/JNK1 reduces interaction with KIF1A and neuronal dense core vesicles mobility. In terms of tissue distribution, expressed in many regions of the nervous system but is undetectable in extra neural tissues.

Its subcellular location is the cytoplasmic vesicle. The protein localises to the secretory vesicle. It localises to the neuronal dense core vesicle membrane. Functionally, synaptotagmin family member which does not bind Ca(2+). Plays a role in dendrite formation by melanocytes. Synaptotagmin family member which does not bind Ca(2+). Involved in neuronal dense core vesicles (DCVs) mobility through its interaction with KIF1A. Upon increased neuronal activity, phosphorylation by MAPK8/JNK1 destabilizes the interaction with KIF1A and captures DCVs to synapses. Plays a role in dendrite formation by melanocytes. The protein is Synaptotagmin-4 (Syt4) of Mus musculus (Mouse).